A 922-amino-acid polypeptide reads, in one-letter code: Translation initiation factor IF-2 (922 aa).

A disordered region spans residues 243–329 (AAREAAKLAE…GKSKSGQEET (87 aa)). The segment covering 250–264 (LAEAQKAAAPAPAAP) has biased composition (low complexity). Residues 267–298 (KTLHKPDKPAAAKGAKGPDKKPAGAWKDDAAR) are compositionally biased toward basic and acidic residues. A tr-type G domain is found at 422–589 (ARPPVVTVMG…AILLQAEVLE (168 aa)). Positions 431-438 (GHVDHGKT) are G1. Residue 431–438 (GHVDHGKT) participates in GTP binding. The tract at residues 456 to 460 (GITQH) is G2. The segment at 477-480 (DTPG) is G3. Residues 477 to 481 (DTPGH) and 531 to 534 (NKID) contribute to the GTP site. The segment at 531 to 534 (NKID) is G4. The segment at 567 to 569 (SAK) is G5.

Belongs to the TRAFAC class translation factor GTPase superfamily. Classic translation factor GTPase family. IF-2 subfamily.

The protein localises to the cytoplasm. Its function is as follows. One of the essential components for the initiation of protein synthesis. Protects formylmethionyl-tRNA from spontaneous hydrolysis and promotes its binding to the 30S ribosomal subunits. Also involved in the hydrolysis of GTP during the formation of the 70S ribosomal complex. The polypeptide is Translation initiation factor IF-2 (Thiobacillus denitrificans (strain ATCC 25259 / T1)).